The chain runs to 180 residues: Large ribosomal subunit protein uL5 (180 aa).

The protein belongs to the universal ribosomal protein uL5 family. Part of the 50S ribosomal subunit; part of the 5S rRNA/L5/L18/L25 subcomplex. Contacts the 5S rRNA and the P site tRNA. Forms a bridge to the 30S subunit in the 70S ribosome.

Functionally, this is one of the proteins that bind and probably mediate the attachment of the 5S RNA into the large ribosomal subunit, where it forms part of the central protuberance. In the 70S ribosome it contacts protein S13 of the 30S subunit (bridge B1b), connecting the 2 subunits; this bridge is implicated in subunit movement. Contacts the P site tRNA; the 5S rRNA and some of its associated proteins might help stabilize positioning of ribosome-bound tRNAs. The sequence is that of Large ribosomal subunit protein uL5 from Leuconostoc citreum (strain KM20).